A 20-amino-acid polypeptide reads, in one-letter code: Collagenolytic protease 36 kDa A (20 aa).

In terms of domain architecture, Peptidase S1 spans 1 to 20; the sequence is IVGGTEVTPGEIPYQLSLQD. Residues 1–20 form a disordered region; sequence IVGGTEVTPGEIPYQLSLQD.

Belongs to the peptidase S1 family.

It carries out the reaction Hydrolysis of proteins, with broad specificity for peptide bonds. Native collagen is cleaved about 75% of the length of the molecule from the N-terminus. Low activity on small molecule substrates of both trypsin and chymotrypsin.. This enzyme is a serine protease capable of degrading the native triple helix of collagen. The chain is Collagenolytic protease 36 kDa A from Paralithodes camtschaticus (Red king crab).